The sequence spans 123 residues: F-box protein PP2-B3 (123 aa).

Residues 10–56 form the F-box domain; the sequence is PSPFDGLPENCISNIISFTTPRDACFAASVSKAFESAVQSDSVWEKF.

This is F-box protein PP2-B3 (PP2B3) from Arabidopsis thaliana (Mouse-ear cress).